We begin with the raw amino-acid sequence, 316 residues long: HPr kinase/phosphorylase (316 aa).

Active-site residues include H143 and K164. 158–165 (GEAGSGKS) contacts ATP. S165 provides a ligand contact to Mg(2+). The Proton acceptor; for phosphorylation activity. Proton donor; for dephosphorylation activity role is filled by D182. An important for the catalytic mechanism of both phosphorylation and dephosphorylation region spans residues 206 to 215 (LEVRGLGVLN). E207 provides a ligand contact to Mg(2+). Residue R251 is part of the active site. Positions 272-277 (PVMPGR) are important for the catalytic mechanism of dephosphorylation.

It belongs to the HPrK/P family. In terms of assembly, homohexamer. Mg(2+) serves as cofactor.

It carries out the reaction [HPr protein]-L-serine + ATP = [HPr protein]-O-phospho-L-serine + ADP + H(+). The enzyme catalyses [HPr protein]-O-phospho-L-serine + phosphate + H(+) = [HPr protein]-L-serine + diphosphate. Catalyzes the ATP- as well as the pyrophosphate-dependent phosphorylation of a specific serine residue in HPr, a phosphocarrier protein of the phosphoenolpyruvate-dependent sugar phosphotransferase system (PTS). HprK/P also catalyzes the pyrophosphate-producing, inorganic phosphate-dependent dephosphorylation (phosphorolysis) of seryl-phosphorylated HPr (P-Ser-HPr). This Xanthomonas axonopodis pv. citri (strain 306) protein is HPr kinase/phosphorylase.